The chain runs to 231 residues: S-norcoclaurine synthase 1 (231 aa).

107-109 contributes to the dopamine binding site; the sequence is YKE. The active-site Proton donor is lysine 121. Aspartate 140 contacts (4-hydroxyphenyl)acetaldehyde. A helical membrane pass occupies residues 210–230; sequence LLLCLIICLVIAGGMFVAGVP.

It belongs to the BetVI family. As to expression, detected in roots, stems, leaves, flower buds and germinating seeds.

It is found in the membrane. The enzyme catalyses (4-hydroxyphenyl)acetaldehyde + dopamine = (S)-norcoclaurine + H2O. Its pathway is alkaloid biosynthesis; (S)-reticuline biosynthesis. Its activity is regulated as follows. Activity doubles within 5 hours of elicitor treatment and continues to increase for at least 80 hours. Functionally, involved in the biosynthesis of (S)-coclaurine, the common precursor of all benzylisoquinoline alkaloids such as morphine, sanguinarine, codeine or papaverine. Condenses dopamine and 4-hydroxyphenylacetaldehyde. This is S-norcoclaurine synthase 1 from Papaver somniferum (Opium poppy).